The chain runs to 907 residues: Probable ubiquitin-conjugating enzyme E2 24 (907 aa).

2 disordered regions span residues 1-23 (MEMSLTDSDWDSSSDSGSSEHEE) and 485-509 (SSTVSSEGSVQDLSQKISQSDEASS). Positions 495-509 (QDLSQKISQSDEASS) are enriched in polar residues. Residues 662 to 822 (SWVKKVQQEW…AFLITCKSMI (161 aa)) enclose the UBC core domain. C748 serves as the catalytic Glycyl thioester intermediate.

This sequence belongs to the ubiquitin-conjugating enzyme family. In terms of assembly, interacts with PHO1. Interacts with NLA. In terms of tissue distribution, expressed in the vascular tissues of cotyledons, leaves, roots, sepals, filaments, anthers and junctions between the inflorescence stems and siliques.

It localises to the golgi apparatus membrane. The protein localises to the endoplasmic reticulum membrane. The enzyme catalyses S-ubiquitinyl-[E1 ubiquitin-activating enzyme]-L-cysteine + [E2 ubiquitin-conjugating enzyme]-L-cysteine = [E1 ubiquitin-activating enzyme]-L-cysteine + S-ubiquitinyl-[E2 ubiquitin-conjugating enzyme]-L-cysteine.. It participates in protein modification; protein ubiquitination. E2 ubiquitin-protein ligase that mediates E1-dependent protein ubiquitination. Mediates PHO1 degradation through multivesicular body-mediated vacuolar proteolysis in response to inorganic phosphate (Pi) availability. Negatively regulates the protein abundance of PHF1 and PHT1s under Pi-sufficient conditions by facilitating the degradation of PHT1 proteins at the endomembrane. Functions cooperatively with NLA to regulate the abundance of the inorganic phosphate (Pi) transporters PHT1-1, PHT1-2 and PHT1-3 in different subcellular compartments. Regulates Pi homeostasis by mediating, cooperatively with NLA, polyubiquitination of PHT1-4 and its targeting for degradation. The polypeptide is Probable ubiquitin-conjugating enzyme E2 24 (Arabidopsis thaliana (Mouse-ear cress)).